A 109-amino-acid polypeptide reads, in one-letter code: Putative gametogenetin-binding protein 1 (109 aa).

The segment at 24–109 is interaction with GGN; the sequence is KAFRSTDTVG…KGEMGNWPPE (86 aa).

Interacts with CCDC159. Interacts with GGN.

It is found in the cytoplasm. The protein localises to the membrane. The protein resides in the golgi apparatus. Its function is as follows. May be involved in spermatogenesis. This is Putative gametogenetin-binding protein 1 (GGNBP1) from Homo sapiens (Human).